A 112-amino-acid polypeptide reads, in one-letter code: MTESEFLKQAEATLDQIEASLEDLADTSDLDVECTRSGNVLEIEFIDNGSKIIVNSQAPMQELWVAAKSGGFHFKATGTQWINTRDGAELFAALSEMVSKQGGIPVVLQDAN.

This sequence belongs to the frataxin family.

Its function is as follows. Involved in iron-sulfur (Fe-S) cluster assembly. May act as a regulator of Fe-S biogenesis. This chain is Iron-sulfur cluster assembly protein CyaY, found in Janthinobacterium sp. (strain Marseille) (Minibacterium massiliensis).